A 317-amino-acid chain; its full sequence is Apolipoprotein E (317 aa).

The first 18 residues, 1–18 (MKVLWAALLVTFLAGCQA), serve as a signal peptide directing secretion. A run of 8 repeats spans residues 80–101 (TLMDETMKELKAYKSELEEQLS), 102–123 (PVAEETRARLSKELQAAQARLG), 124–145 (ADMEDVRSRLVQYRSEVQAMLG), 146–167 (QSTEELRARLASHLRKLRKRLL), 168–189 (RDADDLQKRLAVYQAGAREGAE), 190–211 (RGVSAIRERLGPLVEQGRVRAA), 212–233 (TVGSLASQPLQERAQALGERLR), and 234–255 (ARMEEMGSRTRDRLDEVKEQVA). The interval 80–255 (TLMDETMKEL…RLDEVKEQVA (176 aa)) is 8 X 22 AA approximate tandem repeats. The residue at position 143 (methionine 143) is a Methionine sulfoxide. Position 147 is a phosphoserine (serine 147). The LDL and other lipoprotein receptors binding stretch occupies residues 158–168 (HLRKLRKRLLR). Residue 162–165 (LRKR) coordinates heparin. The lipid-binding and lipoprotein association stretch occupies residues 210 to 290 (AATVGSLASQ…SWFEPLVEDM (81 aa)). Residue 229 to 236 (GERLRARM) participates in heparin binding. Positions 266–317 (QQISLQAEAFQARLKSWFEPLVEDMQRQWAGLVEKVQAAVGASTAPVPSDNH) are homooligomerization. Residues 278–290 (RLKSWFEPLVEDM) form a specificity for association with VLDL region.

This sequence belongs to the apolipoprotein A1/A4/E family. Homotetramer. May interact with ABCA1; functionally associated with ABCA1 in the biogenesis of HDLs. May interact with APP/A4 amyloid-beta peptide; the interaction is extremely stable in vitro but its physiological significance is unclear. May interact with MAPT. May interact with MAP2. In the cerebrospinal fluid, interacts with secreted SORL1. Interacts with PMEL; this allows the loading of PMEL luminal fragment on ILVs to induce fibril nucleation. APOE exists as multiple glycosylated and sialylated glycoforms within cells and in plasma. The extent of glycosylation and sialylation are tissue and context specific. In terms of processing, glycated in plasma VLDL. Post-translationally, phosphorylated by FAM20C in the extracellular medium.

The protein localises to the secreted. The protein resides in the extracellular space. Its subcellular location is the extracellular matrix. It localises to the extracellular vesicle. It is found in the endosome. The protein localises to the multivesicular body. In terms of biological role, APOE is an apolipoprotein, a protein associating with lipid particles, that mainly functions in lipoprotein-mediated lipid transport between organs via the plasma and interstitial fluids. APOE is a core component of plasma lipoproteins and is involved in their production, conversion and clearance. Apolipoproteins are amphipathic molecules that interact both with lipids of the lipoprotein particle core and the aqueous environment of the plasma. As such, APOE associates with chylomicrons, chylomicron remnants, very low density lipoproteins (VLDL) and intermediate density lipoproteins (IDL) but shows a preferential binding to high-density lipoproteins (HDL). It also binds a wide range of cellular receptors including the LDL receptor/LDLR, the LDL receptor-related proteins LRP1, LRP2 and LRP8 and the very low-density lipoprotein receptor/VLDLR that mediate the cellular uptake of the APOE-containing lipoprotein particles. Finally, APOE also has a heparin-binding activity and binds heparan-sulfate proteoglycans on the surface of cells, a property that supports the capture and the receptor-mediated uptake of APOE-containing lipoproteins by cells. A main function of APOE is to mediate lipoprotein clearance through the uptake of chylomicrons, VLDLs, and HDLs by hepatocytes. APOE is also involved in the biosynthesis by the liver of VLDLs as well as their uptake by peripheral tissues ensuring the delivery of triglycerides and energy storage in muscle, heart and adipose tissues. By participating in the lipoprotein-mediated distribution of lipids among tissues, APOE plays a critical role in plasma and tissues lipid homeostasis. APOE is also involved in two steps of reverse cholesterol transport, the HDLs-mediated transport of cholesterol from peripheral tissues to the liver, and thereby plays an important role in cholesterol homeostasis. First, it is functionally associated with ABCA1 in the biogenesis of HDLs in tissues. Second, it is enriched in circulating HDLs and mediates their uptake by hepatocytes. APOE also plays an important role in lipid transport in the central nervous system, regulating neuron survival and sprouting. This is Apolipoprotein E (APOE) from Papio anubis (Olive baboon).